We begin with the raw amino-acid sequence, 106 residues long: Large ribosomal subunit protein cL38 (106 aa).

The transit peptide at 1–39 (MSVSAIFGTGIVTVAASPVLRQFQVPKLGNGGGLGMVIE) directs the protein to the chloroplast. The segment at 42-70 (SRPQKKSTAHHRKTRPKKTQPWDIKRKPT) is disordered. Positions 44 to 59 (PQKKSTAHHRKTRPKK) are enriched in basic residues.

Belongs to the chloroplast-specific ribosomal protein cL38 family. As to quaternary structure, part of the 50S ribosomal subunit.

The protein localises to the plastid. It is found in the chloroplast. The polypeptide is Large ribosomal subunit protein cL38 (PSRP6) (Arabidopsis thaliana (Mouse-ear cress)).